The sequence spans 578 residues: MKNSFLINILIIYYLFIILFVNSQDLKLGGSCELIDSNSPCFSKLNYTNFYLQPGDSITQLNKNVSDIIRMLEFTTPECKPNAINIMCLKSYPKCETYNETLSNNTNIIFNLPSLPCNSICLKAETPCKIFIDNFIKDLSCNSNFSNGAPMFPINSTDYEFKESGNFNFNVECNDNIIYDNSSSVINCPAPLLNSKDHVIPGKTTYYYITDSCILDCPFEIYPGKTKILDRTNYTLTSISFITCIFMILTFGVLPNKITHRMESILSFACGGCITALSLFIQSRQDNFNCSSDPGRFKSQSDYLCLLTGLIFQFGAITSIFWSPMIAYDFYITSTLGKIRKFGLYRIVLWSFIFVLTALPAFGGKYSATVATNCWINSDDGSAWQYVSFYIPSWCAMGLICLFSILSVINVSKMYIQTPNNRILFFNIKILITLLLFLFVLTFASSLKFYMEERMDTYFDAIAVWVECIGKGDPSQCELHAPGYDLKALNIVVIGILGFTVFIGYGLDPIVIHIWMESKKFQWVLKKCRLDKIIKLNNSINNSNNNNNETASTSSGNERKQTTVKMSNLKSTEINQQP.

Positions 1–23 (MKNSFLINILIIYYLFIILFVNS) are cleaved as a signal peptide. Over 24 to 233 (QDLKLGGSCE…GKTKILDRTN (210 aa)) the chain is Extracellular. Residues 27 to 157 (KLGGSCELID…GAPMFPINST (131 aa)) enclose the FZ domain. 4 disulfides stabilise this stretch: Cys-32/Cys-95, Cys-41/Cys-88, Cys-79/Cys-128, and Cys-121/Cys-141. N-linked (GlcNAc...) asparagine glycosylation is found at Asn-46, Asn-64, Asn-99, and Asn-104. N-linked (GlcNAc...) asparagine glycosylation is found at Asn-144, Asn-155, Asn-181, and Asn-233. Residues 234 to 254 (YTLTSISFITCIFMILTFGVL) form a helical membrane-spanning segment. The Cytoplasmic segment spans residues 255–261 (PNKITHR). The helical transmembrane segment at 262-282 (MESILSFACGGCITALSLFIQ) threads the bilayer. Residues 283 to 305 (SRQDNFNCSSDPGRFKSQSDYLC) are Extracellular-facing. N-linked (GlcNAc...) asparagine glycosylation is present at Asn-289. A helical membrane pass occupies residues 306-326 (LLTGLIFQFGAITSIFWSPMI). The Cytoplasmic portion of the chain corresponds to 327–341 (AYDFYITSTLGKIRK). A helical transmembrane segment spans residues 342–362 (FGLYRIVLWSFIFVLTALPAF). Over 363–388 (GGKYSATVATNCWINSDDGSAWQYVS) the chain is Extracellular. The chain crosses the membrane as a helical span at residues 389-409 (FYIPSWCAMGLICLFSILSVI). Topologically, residues 410–422 (NVSKMYIQTPNNR) are cytoplasmic. Residues 423-443 (ILFFNIKILITLLLFLFVLTF) traverse the membrane as a helical segment. The Extracellular portion of the chain corresponds to 444–490 (ASSLKFYMEERMDTYFDAIAVWVECIGKGDPSQCELHAPGYDLKALN). Residues 491-511 (IVVIGILGFTVFIGYGLDPIV) form a helical membrane-spanning segment. Over 512–578 (IHIWMESKKF…LKSTEINQQP (67 aa)) the chain is Cytoplasmic. A compositionally biased stretch (low complexity) spans 544–556 (NNNNNETASTSSG). The interval 544 to 578 (NNNNNETASTSSGNERKQTTVKMSNLKSTEINQQP) is disordered. Positions 563–578 (TVKMSNLKSTEINQQP) are enriched in polar residues.

This sequence belongs to the G-protein coupled receptor Fz/Smo family.

The protein localises to the membrane. In Dictyostelium discoideum (Social amoeba), this protein is Frizzled and smoothened-like protein Q (fslQ).